Here is a 1137-residue protein sequence, read N- to C-terminus: DENN domain-containing protein 2B (1137 aa).

Residues 1 to 12 (MTMTANKNSSIT) are compositionally biased toward polar residues. The tract at residues 1–99 (MTMTANKNSS…PTCPFKTASF (99 aa)) is disordered. A phosphoserine mark is found at S30 and S32. The segment covering 32–43 (SPPPVLSPPRSP) has biased composition (pro residues). Residues 49–64 (DSETSACRYPSHSSSR) show a composition bias toward polar residues. Pro residues predominate over residues 73–92 (PAPSPQNPQDPSPDTSPPTC). Residue T231 is modified to Phosphothreonine. At S233 the chain carries Phosphoserine. The disordered stretch occupies residues 293–573 (KEQPGRGLPQ…HRLPRLPKRH (281 aa)). Residues 324–348 (EEPAGGASVSAGSRAVGVAGVAGEA) are compositionally biased toward low complexity. Phosphothreonine is present on T364. S368 carries the post-translational modification Phosphoserine. Over residues 368–380 (SPSSQRLPSKSSL) the composition is skewed to low complexity. Residues 392–402 (RTFEYEADKNP) show a composition bias toward basic and acidic residues. The segment at 401-447 (NPKSKPSNGLPPSPTPAAPPPLPSTPAPPVTRRPKKDMRGHRKSQSR) is interaction with ABL1. The span at 409–431 (GLPPSPTPAAPPPLPSTPAPPVT) shows a compositional bias: pro residues. Residues 432–446 (RRPKKDMRGHRKSQS) are compositionally biased toward basic residues. The span at 456-481 (SSLQSLYPSSPTENGTENQPKFGSKS) shows a compositional bias: polar residues. Phosphothreonine is present on T482. A compositionally biased stretch (basic and acidic residues) spans 495–508 (LPKENPYEDVDLKS). 2 stretches are compositionally biased toward polar residues: residues 514 to 524 (KSQQLSENSLD) and 539 to 558 (SPPT…SGNW). At S545 the chain carries Phosphoserine. Positions 562 to 573 (KSHRLPRLPKRH) are enriched in basic residues. Phosphoserine is present on residues S574 and S622. The tract at residues 641–661 (IETASLRDENSESESDSDDRF) is disordered. A uDENN domain is found at 698–846 (EYFVVVSLKK…PFPAPGKTIK (149 aa)). The 134-residue stretch at 868–1001 (RLEHVDFECL…LQAALEQALE (134 aa)) folds into the cDENN domain. Residues 1003–1096 (KNELISQDSD…QDRELRKCRA (94 aa)) enclose the dDENN domain.

Interacts with ITSN1 and GRB2. Isoform 1 interacts with the SH3 domain of ABL1. In terms of processing, phosphorylated. Phosphorylation decreases ITSN1 binding. As to expression, widely expressed with the exception of peripheral blood lymphocytes. Isoform 1 is expressed in several epithelial and fibroblast (including tumorigenic) but absent in lymphoid cell lines (at protein level). Isoform 3 is expressed in primary cell or weakly tumorigenic but not in tumorigenic cell lines (at protein level).

It is found in the cytoplasm. Its subcellular location is the cell cortex. The protein localises to the cell membrane. It localises to the recycling endosome. Its function is as follows. May be involved in cytoskeletal organization and tumorogenicity. Seems to be involved in a signaling transduction pathway leading to activation of MAPK1/ERK2. Plays a role in EGFR trafficking from recycling endosomes back to the cell membrane. In terms of biological role, guanine nucleotide exchange factor (GEF) which may activate RAB9A and RAB9B. Promotes the exchange of GDP to GTP, converting inactive GDP-bound Rab proteins into their active GTP-bound form. Functionally, may block ERK2 activation stimulated by ABL1. May alter cell morphology and cell growth. The protein is DENN domain-containing protein 2B of Homo sapiens (Human).